Consider the following 101-residue polypeptide: Small ribosomal subunit protein bS18c (101 aa).

Belongs to the bacterial ribosomal protein bS18 family. In terms of assembly, part of the 30S ribosomal subunit.

The protein localises to the plastid. The protein resides in the chloroplast. The protein is Small ribosomal subunit protein bS18c of Eucalyptus globulus subsp. globulus (Tasmanian blue gum).